The chain runs to 165 residues: Histone H1 (165 aa).

Residues 1–165 (GKQSTSKSVT…KKATKGSKKN (165 aa)) form a disordered region. Basic and acidic residues predominate over residues 9-18 (VTREKKDVKK). Residues 20–31 (VAPKKAIKKVTK) are compositionally biased toward basic residues. Residues 32-41 (KSTTPVKTSK) are compositionally biased toward low complexity. A phosphothreonine mark is found at Thr-48 and Thr-54. The span at 68–89 (TMKESVSDAKKTVHKSAGDKKL) shows a compositional bias: basic and acidic residues. Ser-83 is modified (phosphoserine). Positions 103-117 (KIVHPAKKAAAKPKT) are enriched in basic residues. A Phosphothreonine modification is found at Thr-117. Residues 118–157 (AKKEVKKDTKPVKKDAKKDTKPVKKDAKKDTKPAKKDTKK) are compositionally biased toward basic and acidic residues.

In terms of processing, cell-growth/division-associated phosphorylation by a CDC2-like kinase. Is additionally phosphorylated on either Ser-33, Thr-34 or Thr-35, and on either Thr-39 or Ser-40.

It is found in the nucleus. The protein localises to the chromosome. Histones H1 are necessary for the condensation of nucleosome chains into higher-order structures. The sequence is that of Histone H1 (HHO) from Tetrahymena pyriformis.